A 218-amino-acid chain; its full sequence is Alkylmercury lyase (218 aa).

This sequence belongs to the MerB family.

The catalysed reaction is an alkylmercury + H(+) = an alkane + Hg(2+). In terms of biological role, cleaves the carbon-mercury bond of organomercurials such as phenylmercuric acetate. One product is Hg(2+), which is subsequently detoxified by the mercuric reductase. The sequence is that of Alkylmercury lyase from Clostridium butyricum.